The sequence spans 519 residues: uncharacterized protein (519 aa).

Over residues 477–486 (IKRERAHVTQ) the composition is skewed to basic residues. The tract at residues 477–519 (IKRERAHVTQRNKPPPSGGDTAVAEGFEPPDGVSRLSLSRRVH) is disordered.

This is an uncharacterized protein from Mycobacterium tuberculosis (strain ATCC 25618 / H37Rv).